The sequence spans 530 residues: Transcription factor SPT20 homolog (530 aa).

S296 carries the post-translational modification Phosphoserine. The interval 419–530 (CPVKMSHSSS…PASSSQRHES (112 aa)) is disordered. 2 stretches are compositionally biased toward low complexity: residues 424–436 (SHSS…LNSG) and 466–475 (SSSGNSSSGN). A Phosphothreonine modification is found at T490. Residues 514 to 530 (LSPAALSPASSSQRHES) are compositionally biased toward low complexity. S515 and S520 each carry phosphoserine.

Belongs to the SPT20 family. As to quaternary structure, interacts with ATG9A. Interacts with MAPK14.

Functionally, required for MAP kinase p38 (MAPK11, MAPK12, MAPK13 and/or MAPK14) activation during gastrulation. Required for down-regulation of E-cadherin during gastrulation by regulating E-cadherin protein level downstream from NCK-interacting kinase (NIK) and independently of the regulation of transcription by FGF signaling and Snail. Required for starvation-induced ATG9A trafficking during autophagy. The chain is Transcription factor SPT20 homolog (Supt20h) from Rattus norvegicus (Rat).